A 138-amino-acid polypeptide reads, in one-letter code: Small ribosomal subunit protein uS11c (138 aa).

The segment at 1–23 is disordered; it reads MAKPILRIGSRKNTRSGSRKNVR. The span at 9–23 shows a compositional bias: basic residues; sequence GSRKNTRSGSRKNVR.

Belongs to the universal ribosomal protein uS11 family. As to quaternary structure, part of the 30S ribosomal subunit.

The protein resides in the plastid. The protein localises to the chloroplast. The polypeptide is Small ribosomal subunit protein uS11c (Barbarea verna (Land cress)).